A 397-amino-acid polypeptide reads, in one-letter code: CCA-adding enzyme (397 aa).

ATP is bound by residues G26 and R29. The CTP site is built by G26 and R29. D39 and D41 together coordinate Mg(2+). 5 residues coordinate ATP: R110, D153, R156, R159, and R162. CTP is bound by residues R110, D153, R156, R159, and R162.

It belongs to the tRNA nucleotidyltransferase/poly(A) polymerase family. Bacterial CCA-adding enzyme type 3 subfamily. As to quaternary structure, homodimer. Requires Mg(2+) as cofactor.

The catalysed reaction is a tRNA precursor + 2 CTP + ATP = a tRNA with a 3' CCA end + 3 diphosphate. It carries out the reaction a tRNA with a 3' CCA end + 2 CTP + ATP = a tRNA with a 3' CCACCA end + 3 diphosphate. Functionally, catalyzes the addition and repair of the essential 3'-terminal CCA sequence in tRNAs without using a nucleic acid template. Adds these three nucleotides in the order of C, C, and A to the tRNA nucleotide-73, using CTP and ATP as substrates and producing inorganic pyrophosphate. tRNA 3'-terminal CCA addition is required both for tRNA processing and repair. Also involved in tRNA surveillance by mediating tandem CCA addition to generate a CCACCA at the 3' terminus of unstable tRNAs. While stable tRNAs receive only 3'-terminal CCA, unstable tRNAs are marked with CCACCA and rapidly degraded. The chain is CCA-adding enzyme from Bacillus cereus (strain G9842).